The chain runs to 548 residues: Chaperonin GroEL (548 aa).

ATP is bound by residues 30–33 (TLGP), Lys-51, 87–91 (DGTTT), Gly-415, 479–481 (NAA), and Asp-495. The tract at residues 526 to 548 (KEDKSSDLGSAPAGGMGGMGGMM) is disordered. A compositionally biased stretch (gly residues) spans 537–548 (PAGGMGGMGGMM).

It belongs to the chaperonin (HSP60) family. Forms a cylinder of 14 subunits composed of two heptameric rings stacked back-to-back. Interacts with the co-chaperonin GroES.

The protein resides in the cytoplasm. The catalysed reaction is ATP + H2O + a folded polypeptide = ADP + phosphate + an unfolded polypeptide.. In terms of biological role, together with its co-chaperonin GroES, plays an essential role in assisting protein folding. The GroEL-GroES system forms a nano-cage that allows encapsulation of the non-native substrate proteins and provides a physical environment optimized to promote and accelerate protein folding. This Buchnera aphidicola subsp. Pterocomma populeum protein is Chaperonin GroEL.